Here is a 319-residue protein sequence, read N- to C-terminus: Sphingomyelinase D (319 aa).

The signal sequence occupies residues 1–23; it reads MTPLLRTICAILCILIAVPLTFA. Residue histidine 44 is part of the active site. The Mg(2+) site is built by glutamate 64, aspartate 66, and aspartate 109. Residues 312–319 carry the SMD-tail motif; that stretch reads ATGADKPW.

Belongs to the sphingomyelinase D/phospholipase D family. Requires Mg(2+) as cofactor.

The protein localises to the secreted. The catalysed reaction is a sphingomyelin + H2O = an N-acylsphing-4-enine 1-phosphate + choline + H(+). Catalyzes the hydrolysis of sphingomyelin. Sphingomyelinases D are produced by some spider in their venoms, but also by arthropods such as ticks, or pathogenic bacteria and fungi. They might play a role in pathogenicity through different mechanisms, such as membrane destabilization and host cell penetration, but also pulmonary inflammation and cutaneous lesions. The protein is Sphingomyelinase D of Ajellomyces capsulatus (strain G186AR / H82 / ATCC MYA-2454 / RMSCC 2432) (Darling's disease fungus).